Consider the following 444-residue polypeptide: Phosphoglucosamine mutase (444 aa).

Ser103 serves as the catalytic Phosphoserine intermediate. Residues Ser103, Asp242, Asp244, and Asp246 each coordinate Mg(2+). Ser103 carries the post-translational modification Phosphoserine.

The protein belongs to the phosphohexose mutase family. Mg(2+) is required as a cofactor. Activated by phosphorylation.

The catalysed reaction is alpha-D-glucosamine 1-phosphate = D-glucosamine 6-phosphate. Catalyzes the conversion of glucosamine-6-phosphate to glucosamine-1-phosphate. The chain is Phosphoglucosamine mutase from Hydrogenovibrio crunogenus (strain DSM 25203 / XCL-2) (Thiomicrospira crunogena).